Reading from the N-terminus, the 251-residue chain is MLDLLRLQLTTFIMNDVPTPYACYFQDSATPNQEGILELHDNIMFYLLVILGLVSWMLYTIVMTYSKNPIAYKYIKHGQTIEVIWTIFPAVILLIIAFPSFILLYLCDEVISPAMTIKAIGYQWYWKYEYSDFINDSGETVEFESYVIPDELLEEGQLRLLDTDTSMVVPVDTHIRFVVTAADVIHDFAIPSLGIKVDATPGRLNQVSALIQREGVFYGACSELCGTGHANMPIKIEAVSLPKFLEWLNEQ.

Positions 1–15 are cleaved as a propeptide — removed in mature form; it reads MLDLLRLQLTTFIMN. The Mitochondrial intermembrane segment spans residues 16-30; it reads DVPTPYACYFQDSAT. A helical transmembrane segment spans residues 31-64; that stretch reads PNQEGILELHDNIMFYLLVILGLVSWMLYTIVMT. Residues 65-78 lie on the Mitochondrial matrix side of the membrane; that stretch reads YSKNPIAYKYIKHG. The chain crosses the membrane as a helical span at residues 79–108; it reads QTIEVIWTIFPAVILLIIAFPSFILLYLCD. Residues 109–251 lie on the Mitochondrial intermembrane side of the membrane; that stretch reads EVISPAMTIK…PKFLEWLNEQ (143 aa). 6 residues coordinate Cu cation: His186, Cys221, Glu223, Cys225, His229, and Met232. A Mg(2+)-binding site is contributed by Glu223.

It belongs to the cytochrome c oxidase subunit 2 family. As to quaternary structure, component of the cytochrome c oxidase (complex IV, CIV), a multisubunit enzyme composed of 12 subunits. The complex is composed of a catalytic core of 3 subunits COX1, COX2 and COX3, encoded in the mitochondrial DNA, and 9 supernumerary subunits COX4, COX5A (or COX5B), COX6, COX7, COX8, COX9, COX12, COX13 and COX26, which are encoded in the nuclear genome. The complex exists as a monomer or a dimer and forms supercomplexes (SCs) in the inner mitochondrial membrane with a dimer of ubiquinol-cytochrome c oxidoreductase (cytochrome b-c1 complex, complex III, CIII), resulting in 2 different assemblies (supercomplexes III(2)IV and III(2)IV(2)). It depends on Cu cation as a cofactor. The N-terminal sequence of COX2 is processed by IMP1.

The protein resides in the mitochondrion inner membrane. The enzyme catalyses 4 Fe(II)-[cytochrome c] + O2 + 8 H(+)(in) = 4 Fe(III)-[cytochrome c] + 2 H2O + 4 H(+)(out). In terms of biological role, component of the cytochrome c oxidase, the last enzyme in the mitochondrial electron transport chain which drives oxidative phosphorylation. The respiratory chain contains 3 multisubunit complexes succinate dehydrogenase (complex II, CII), ubiquinol-cytochrome c oxidoreductase (cytochrome b-c1 complex, complex III, CIII) and cytochrome c oxidase (complex IV, CIV), that cooperate to transfer electrons derived from NADH and succinate to molecular oxygen, creating an electrochemical gradient over the inner membrane that drives transmembrane transport and the ATP synthase. Cytochrome c oxidase is the component of the respiratory chain that catalyzes the reduction of oxygen to water. Electrons originating from reduced cytochrome c in the intermembrane space (IMS) are transferred via the dinuclear copper A center (CU(A)) of COX2 and heme A of COX1 to the active site in COX1, a binuclear center (BNC) formed by heme A3 and copper B (CU(B)). The BNC reduces molecular oxygen to 2 water molecules unsing 4 electrons from cytochrome c in the IMS and 4 protons from the mitochondrial matrix. COX2 is a catalytic core subunit which transfers the electrons from cytochrome c via its dinuclear copper A center (CU(A)) to the BNC of the COX1. In Saccharomyces cerevisiae (strain ATCC 204508 / S288c) (Baker's yeast), this protein is Cytochrome c oxidase subunit 2 (COX2).